The following is a 737-amino-acid chain: 1,4-alpha-glucan branching enzyme GlgB (737 aa).

Aspartate 399 (nucleophile) is an active-site residue. Glutamate 452 functions as the Proton donor in the catalytic mechanism.

Belongs to the glycosyl hydrolase 13 family. GlgB subfamily. As to quaternary structure, monomer.

The enzyme catalyses Transfers a segment of a (1-&gt;4)-alpha-D-glucan chain to a primary hydroxy group in a similar glucan chain.. The protein operates within glycan biosynthesis; glycogen biosynthesis. Functionally, catalyzes the formation of the alpha-1,6-glucosidic linkages in glycogen by scission of a 1,4-alpha-linked oligosaccharide from growing alpha-1,4-glucan chains and the subsequent attachment of the oligosaccharide to the alpha-1,6 position. This is 1,4-alpha-glucan branching enzyme GlgB from Chlamydia muridarum (strain MoPn / Nigg).